We begin with the raw amino-acid sequence, 224 residues long: MISWLKGEKVHTWKISSRKGVVLNVGGVGYEIQLLPKQIDKAEVLNEFELWIHQIDREDGTSLYGFIEVNQRDLFREIISVNGIGPQIGMAMLEEFEVPQLVNAIENKESNLLTKTQGIGKRIAERLIVELRNKLQRFTDNDKTIHENKNDIEANQFSKYIDEIYLILNSLGYVDNEIKESIKIITINEKENSLLLNSSSAEEKADLMDKHLKEILMKLSEKST.

Positions 1 to 67 are domain I; sequence MISWLKGEKV…EDGTSLYGFI (67 aa). Residues 68 to 146 are domain II; sequence EVNQRDLFRE…RFTDNDKTIH (79 aa). The flexible linker stretch occupies residues 147–157; the sequence is ENKNDIEANQF. Residues 157-224 are domain III; that stretch reads FSKYIDEIYL…ILMKLSEKST (68 aa).

Belongs to the RuvA family. In terms of assembly, homotetramer. Forms an RuvA(8)-RuvB(12)-Holliday junction (HJ) complex. HJ DNA is sandwiched between 2 RuvA tetramers; dsDNA enters through RuvA and exits via RuvB. An RuvB hexamer assembles on each DNA strand where it exits the tetramer. Each RuvB hexamer is contacted by two RuvA subunits (via domain III) on 2 adjacent RuvB subunits; this complex drives branch migration. In the full resolvosome a probable DNA-RuvA(4)-RuvB(12)-RuvC(2) complex forms which resolves the HJ.

The protein localises to the cytoplasm. The RuvA-RuvB-RuvC complex processes Holliday junction (HJ) DNA during genetic recombination and DNA repair, while the RuvA-RuvB complex plays an important role in the rescue of blocked DNA replication forks via replication fork reversal (RFR). RuvA specifically binds to HJ cruciform DNA, conferring on it an open structure. The RuvB hexamer acts as an ATP-dependent pump, pulling dsDNA into and through the RuvAB complex. HJ branch migration allows RuvC to scan DNA until it finds its consensus sequence, where it cleaves and resolves the cruciform DNA. The polypeptide is Holliday junction branch migration complex subunit RuvA (Prochlorococcus marinus (strain NATL2A)).